A 633-amino-acid chain; its full sequence is GTPase-GDP dissociation stimulator BEM4 (633 aa).

As to quaternary structure, interacts with CDC42; the interaction is direct. Interacts with RHO1; the interaction is direct. Interacts with RHO2. Interacts with RHO4. Interacts with CDC11.

The protein resides in the nucleus. The protein localises to the cytoplasm. Probably acts as a GEF (guanine nucleotide exchange factor) for the Rho family of small GTP-binding proteins (G proteins) that stimulates the dissociation of GDP to enable subsequent binding of GTP. May also chaperone the processing and/or trafficking of small GTPases independently of GEF activity. Involved in the control of polarized cell growth via CDC42-mediated signaling. Involved in the control of cell-wall organization via RHO1-mediated signaling. May also function via RHO2 and RHO4. The protein is GTPase-GDP dissociation stimulator BEM4 of Saccharomyces cerevisiae (strain ATCC 204508 / S288c) (Baker's yeast).